We begin with the raw amino-acid sequence, 257 residues long: MKDPKAPIGVFDSGVGGLTVLKALRRLLPREEFLYFGDTARVPYGGKPLAMVRRFAWEIAGFLLRQGVKAIVVACNTASSAALPDLAEDLSVPVFGVVEPAARAARGFRKVGLIGTQATVESGAYPRYVDLAWAKACPLFVPLVEEGLWDDPVALLVARHYLEDAPKDLEALILGCTHYPFLKGAIGAVLPGVALLDSAELTAREVARALEAEGLLNPEGRGRTLHLVTGDPEAYRALAERLGERVEAVRRVSLEEL.

Substrate is bound by residues aspartate 12–serine 13 and tyrosine 44–glycine 45. The Proton donor/acceptor role is filled by cysteine 75. Residue asparagine 76 to threonine 77 participates in substrate binding. The active-site Proton donor/acceptor is the cysteine 176. Threonine 177–histidine 178 is a binding site for substrate.

The protein belongs to the aspartate/glutamate racemases family.

The catalysed reaction is L-glutamate = D-glutamate. Its pathway is cell wall biogenesis; peptidoglycan biosynthesis. Its function is as follows. Provides the (R)-glutamate required for cell wall biosynthesis. This Thermus thermophilus (strain ATCC BAA-163 / DSM 7039 / HB27) protein is Glutamate racemase.